We begin with the raw amino-acid sequence, 325 residues long: 6-hydroxymellein 5-farnesyltransferase cdmH (325 aa).

5 helical membrane-spanning segments follow: residues 60-80 (ASIL…GAAG), 113-133 (AFTW…AMLG), 138-158 (WPFM…KRPI), 169-189 (LLGI…YGPC), and 192-212 (ISEI…WSFY). A glycan (N-linked (GlcNAc...) asparagine) is linked at Asn214. 3 helical membrane passes run 243–263 (ALLA…LRPF), 267–287 (WLWL…LLSF), and 295–315 (GGVL…ACTL).

The protein belongs to the UbiA prenyltransferase family. The cofactor is Mg(2+).

The protein resides in the membrane. It catalyses the reaction 6-hydroxymellein + (2E,6E)-farnesyl diphosphate = verruculide C + diphosphate. It participates in secondary metabolite biosynthesis; terpenoid biosynthesis. 6-hydroxymellein 5-farnesyltransferase; part of the gene cluster that mediates the biosynthesis of chrodrimanin B, a meroterpenoid that acts as a potent blocker of insect GABA-gated chloride channels. The first step of the pathway is the biosynthesis of 6-hydroxymellein by the polyketide synthase cdmE. The prenyltransferase cdmH acts as a 6-hydroxymellein 5-farnesyltransferase and produces the hydrophobic metabolite verruculide C. The FAD-dependent monooxygenase cdmI further converts verruculide C into verruculide B. The terpene cyclase cdmG then produced the pentacyclic molecule 3-hydroxypentacecilide A, the backbone structure of chrodrimanin B, via folding the farnesyl moiety of the substrate into the chair-boat conformation. The short-chain dehydrogenase/reductase cdmF functions as the 3-OH dehydrogenase that oxidizes the C-3 hydroxyl group of 3-hydroxypentacecilide A and produces chrodrimanin C, the dehydrogenated product of 3-hydroxypentacecilide A. The cytochrome P450 monooxygenase cdmJ then accepts both 3-hydroxypentacecilide A and chrodrimanin C and functions as a C-7-beta-hydroxylase to produce respectively chrodrimanin H and chrodrimanin F. The dioxygenase cdmA accepts chrodrimanin H to afford chrodrimanin E, which is further transformed to chrodrimanin A by the dioxygenase cdmD. CdmA can also accept chrodrimanin C as substrate to convert it into verruculide A, which is further converted into chrodrimanin T by cdmD. The last step of the biosynthesis is proposed to be performed by the acetyltransferase cdmC which acetylates chrodrimanin A to yield chrodrimanin B. The pathway may also lead to the production of additional shunt products, including chrodrimanins T and U. This Talaromyces verruculosus (Penicillium verruculosum) protein is 6-hydroxymellein 5-farnesyltransferase cdmH.